A 239-amino-acid chain; its full sequence is ATP synthase subunit b (239 aa).

Over residues 1–22 (MYAQEAQQKPEAQQSAPAAEQP) the composition is skewed to low complexity. The interval 1-64 (MYAQEAQQKP…GEEEAGEHME (64 aa)) is disordered. 2 stretches are compositionally biased toward basic and acidic residues: residues 23 to 33 (KPAEEQAKPEQ) and 45 to 64 (ELSEASHAAEGEEEAGEHME). A helical membrane pass occupies residues 85–105 (SYWIAMAFNFAIVFALLGWAM).

This sequence belongs to the ATPase B chain family. In terms of assembly, F-type ATPases have 2 components, F(1) - the catalytic core - and F(0) - the membrane proton channel. F(1) has five subunits: alpha(3), beta(3), gamma(1), delta(1), epsilon(1). F(0) has three main subunits: a(1), b(2) and c(10-14). The alpha and beta chains form an alternating ring which encloses part of the gamma chain. F(1) is attached to F(0) by a central stalk formed by the gamma and epsilon chains, while a peripheral stalk is formed by the delta and b chains.

The protein resides in the cell inner membrane. Its function is as follows. F(1)F(0) ATP synthase produces ATP from ADP in the presence of a proton or sodium gradient. F-type ATPases consist of two structural domains, F(1) containing the extramembraneous catalytic core and F(0) containing the membrane proton channel, linked together by a central stalk and a peripheral stalk. During catalysis, ATP synthesis in the catalytic domain of F(1) is coupled via a rotary mechanism of the central stalk subunits to proton translocation. Functionally, component of the F(0) channel, it forms part of the peripheral stalk, linking F(1) to F(0). The sequence is that of ATP synthase subunit b from Koribacter versatilis (strain Ellin345).